The sequence spans 476 residues: Oogenesin-2 (476 aa).

The LRR 1; degenerate repeat unit spans residues 97-121; that stretch reads RCKLREITLSHDLVVVWAGSHEVEG. The stretch at 176–200 is one LRR 2; degenerate repeat; that stretch reads HLHCRKLKIYGLTKAAVIEMFKIVH. One copy of the LRR 3; degenerate repeat lies at 201-226; that stretch reads AEYIEDLELSCLCLEYLDFLNPYLKQ. One copy of the LRR 4; degenerate repeat lies at 227 to 264; it reads MSNLLSLTLDEIIYTLNIDDYRNLNEEKVITVISHLPT. LRR repeat units follow at residues 265-285, 286-317, 342-369, and 370-394; these read FHHL…LRCL, KKPL…FELR, RHTL…ALSQ, and CYQL…LLHH.

The protein belongs to the PRAME family. As to expression, expressed in ovary, specifically in oocytes. Detected in follicles with two layers of granulosa cells, and are present in early as well as large antral follicles.

The chain is Oogenesin-2 from Mus musculus (Mouse).